The chain runs to 138 residues: Small ribosomal subunit protein uS11c (138 aa).

The disordered stretch occupies residues 1–22 (MAKPIPRIGSQRNRRINSRKNA). Basic residues predominate over residues 12 to 22 (RNRRINSRKNA).

This sequence belongs to the universal ribosomal protein uS11 family. In terms of assembly, part of the 30S ribosomal subunit.

The protein localises to the plastid. It localises to the chloroplast. This Fagopyrum esculentum subsp. ancestrale (Wild buckwheat) protein is Small ribosomal subunit protein uS11c.